The sequence spans 642 residues: Influenza virus NS1A-binding protein (642 aa).

Residues 1–131 (MIPNGYLMFE…GDYLLSRMDV (131 aa)) form the BTB domain. Residues 132–350 (TSCISYRNFA…MQQDELIEKP (219 aa)) enclose the BACK domain. The tract at residues 164–368 (ISEEEEFLKL…SGLGTAEMNG (205 aa)) is sufficient for AHR interaction and signaling. Residues Ser-246, Ser-277, Ser-322, Ser-336, and Ser-338 each carry the phosphoserine modification. Positions 257–281 (KPPRENGHKQISSSSTGCLSSPNAT) are disordered. The segment covering 265–281 (KQISSSSTGCLSSPNAT) has biased composition (polar residues). 6 Kelch repeats span residues 384–421 (TVECYNPHTDHWSFLAPMRTPRARFQMAVLMGQLYVVG), 432–469 (CGEMYDSNIDDWIPVPELRTNRCNAGVCALNGKLYIVG), 481–518 (NCDVFDPVTKLWTSCAPLNIRRHQSAVCELGGYLYIIG), 527–565 (NTVERYNPENNTWTLIAPMNVARRGAGVAVLNGKLFVCG), 575–612 (CVEMYDPTRNEWKMMGNMTSPRSNAGIATVGNTIYAVG), and 622–642 (TVEVYNLESNEWSPYTKIFQF).

This sequence belongs to the BTB-kelch protein family. Homodimer; through the BTB domain. Interacts with AHR/Aryl hydrocarbon receptor. Interacts (via BACK domain) with pre-mRNA-binding protein HNRNPK; the interaction is direct. Interacts (via BACK domain) with splicing factor PTBP1; the interaction is direct. Interacts (via Kelch repeats) with RNA polymerase POLR2A (via C-terminal domain). Interacts (via BACK domain) with splicing factor SNRPA; the interaction is indirect. Interacts (via Kelch repeats) with splicing factor SART1. Interacts (via BACK domain) with ALYREF; the interaction is indirect and likely plays a role in mRNA nuclear export. Interacts (via Kelch repeats) with KLHL20 (via Kelch repeats); this interaction blocks the assembly of Cul3-KLHL20 complex. As to quaternary structure, (Microbial infection) Interacts (via BACK domain) with influenza A virus non-structural protein 1 (NS1); the interaction is direct and bridges the interaction between NS1 and HNRNPK.

It is found in the cytoplasm. The protein localises to the cytoskeleton. The protein resides in the nucleus. Its subcellular location is the nucleoplasm. In terms of biological role, involved in many cell functions, including pre-mRNA splicing, the aryl hydrocarbon receptor (AHR) pathway, F-actin organization and protein ubiquitination. Plays a role in the dynamic organization of the actin skeleton as a stabilizer of actin filaments by association with F-actin through Kelch repeats. Protects cells from cell death induced by actin destabilization. Functions as modifier of the AHR/Aryl hydrocarbon receptor pathway increasing the concentration of AHR available to activate transcription. In addition, functions as a negative regulator of BCR(KLHL20) E3 ubiquitin ligase complex to prevent ubiquitin-mediated proteolysis of PML and DAPK1, two tumor suppressors. Inhibits pre-mRNA splicing (in vitro). May play a role in mRNA nuclear export. (Microbial infection) Involved in the alternative splicing of influenza A virus M1 mRNA through interaction with HNRNPK, thereby facilitating the generation of viral M2 protein. The BTB and Kelch domains are required for splicing activity. Promotes export of viral M mRNA and RNP via its interaction with mRNA export factor ALYREF. The chain is Influenza virus NS1A-binding protein from Homo sapiens (Human).